Here is a 519-residue protein sequence, read N- to C-terminus: Protein tweety homolog 1 (519 aa).

The Extracellular portion of the chain corresponds to 1-42 (MTFASFLINFYSVIPRLNFKFHWTNDVFNLEWSSEYFQALAL). A helical transmembrane segment spans residues 43–63 (VACLGAAVSLLLLVTIIIVWI). Residues 64-82 (CQACHKNETTGKTRRRVRR) are Cytoplasmic-facing. Residues 83–103 (LSTVLFIISVLCFFMLGVCLF) traverse the membrane as a helical segment. Residues 104 to 217 (ANEHVNRGMS…VLSLYESERW (114 aa)) are Extracellular-facing. Residues N142, N163, and N176 are each glycosylated (N-linked (GlcNAc...) asparagine). Residues 218-238 (AFLVILLSITMVVLFTGVVAF) traverse the membrane as a helical segment. Residues 239-245 (CKQSKKG) lie on the Cytoplasmic side of the membrane. Residues 246–266 (AVVFSAIGFFIFVVVWLLISI) form a helical membrane-spanning segment. Topologically, residues 267–395 (SLPLTIALAD…GTCNQSVAGM (129 aa)) are extracellular. N-linked (GlcNAc...) asparagine glycosylation is found at N328, N341, N348, and N389. Residues 396–416 (SIYMLSILLLGVFLFILLIVV) form a helical membrane-spanning segment. Residues 417 to 519 (SKTWNLFSRL…YNNYEDRYNM (103 aa)) lie on the Cytoplasmic side of the membrane. The segment at 459–485 (YNPRTRDRTEPSTNTTSGTADEPNAPL) is disordered.

The protein belongs to the tweety family.

It localises to the cell membrane. Functionally, probable chloride channel. The polypeptide is Protein tweety homolog 1 (ttyh-1) (Caenorhabditis elegans).